Here is a 98-residue protein sequence, read N- to C-terminus: Putative defensin-like protein 233 (98 aa).

The first 28 residues, 1–28, serve as a signal peptide directing secretion; that stretch reads MGMWCTTLFMVSCVSICLILSHVQEVEA. 4 disulfides stabilise this stretch: Cys35–Cys96, Cys45–Cys70, Cys53–Cys86, and Cys68–Cys88.

Belongs to the DEFL family. Expressed at least in stem, root, rosette leaves and flower buds.

It is found in the secreted. This is Putative defensin-like protein 233 (SCRL22) from Arabidopsis thaliana (Mouse-ear cress).